We begin with the raw amino-acid sequence, 117 residues long: Hydrogenase maturation factor HypA (117 aa).

H2 lines the Ni(2+) pocket. Zn(2+) is bound by residues C73, C76, C90, and C93.

This sequence belongs to the HypA/HybF family.

In terms of biological role, involved in the maturation of [NiFe] hydrogenases. Required for nickel insertion into the metal center of the hydrogenase. The chain is Hydrogenase maturation factor HypA from Pectobacterium atrosepticum (strain SCRI 1043 / ATCC BAA-672) (Erwinia carotovora subsp. atroseptica).